The following is a 239-amino-acid chain: Phosphoribosylaminoimidazole-succinocarboxamide synthase (239 aa).

This sequence belongs to the SAICAR synthetase family.

It catalyses the reaction 5-amino-1-(5-phospho-D-ribosyl)imidazole-4-carboxylate + L-aspartate + ATP = (2S)-2-[5-amino-1-(5-phospho-beta-D-ribosyl)imidazole-4-carboxamido]succinate + ADP + phosphate + 2 H(+). Its pathway is purine metabolism; IMP biosynthesis via de novo pathway; 5-amino-1-(5-phospho-D-ribosyl)imidazole-4-carboxamide from 5-amino-1-(5-phospho-D-ribosyl)imidazole-4-carboxylate: step 1/2. This is Phosphoribosylaminoimidazole-succinocarboxamide synthase from Campylobacter hominis (strain ATCC BAA-381 / DSM 21671 / CCUG 45161 / LMG 19568 / NCTC 13146 / CH001A).